Here is a 307-residue protein sequence, read N- to C-terminus: Transcription initiation factor IIB 5 (307 aa).

Residues 19–47 (TTEPCPECGGPVRTNSAETVCADCGLIID) form a TFIIB-type zinc finger. Positions 23, 26, 39, and 42 each coordinate Zn(2+). 2 stretches are compositionally biased toward basic and acidic residues: residues 54–66 (GPEW…DTAK) and 107–121 (MRRE…STKE). Positions 54–121 (GPEWHRDDAD…SRGRWRSTKE (68 aa)) are disordered. 2 consecutive repeat copies span residues 129 to 212 (TEIR…NEEL) and 223 to 304 (QFVP…RLLS).

Belongs to the TFIIB family.

Its function is as follows. Stabilizes TBP binding to an archaeal box-A promoter. Also responsible for recruiting RNA polymerase II to the pre-initiation complex (DNA-TBP-TFIIB). The protein is Transcription initiation factor IIB 5 of Halobacterium salinarum (strain ATCC 700922 / JCM 11081 / NRC-1) (Halobacterium halobium).